Consider the following 490-residue polypeptide: Mitochondria-eating protein (490 aa).

Positions 112-210 form a coiled coil; that stretch reads IRELSSVHES…RILRDEVSFL (99 aa). 2 stretches are compositionally biased toward low complexity: residues 224-241 and 456-490; these read SRSPSPLLRRSRSVSPVR and RSSSPVRSRSGSPSRTFMASHSRSPSPGRLSSSRL. Disordered regions lie at residues 224 to 253 and 455 to 490; these read SRSPSPLLRRSRSVSPVRGESPTRAQLTSS and SRSSSPVRSRSGSPSRTFMASHSRSPSPGRLSSSRL.

Belongs to the MIEAP family.

The protein resides in the cytoplasm. The protein localises to the mitochondrion outer membrane. It is found in the mitochondrion matrix. Functionally, key regulator of mitochondrial quality that mediates the repairing or degradation of unhealthy mitochondria in response to mitochondrial damage. Mediator of mitochondrial protein catabolic process (also named MALM) by mediating the degradation of damaged proteins inside mitochondria by promoting the accumulation in the mitochondrial matrix of hydrolases that are characteristic of the lysosomal lumen. Also involved in mitochondrion degradation of damaged mitochondria by promoting the formation of vacuole-like structures (named MIV), which engulf and degrade unhealthy mitochondria by accumulating lysosomes. Binds cardiolipin. May form molecular condensates (non-membrane-bounded organelles) within mitochondria that compartmentalize and promote cardiolipin metabolism. This is Mitochondria-eating protein (spata18) from Danio rerio (Zebrafish).